Here is a 620-residue protein sequence, read N- to C-terminus: MIYCVLSTTPGTFWFPSGFDPKPYHPSADSKLLPLGLITLSACSTRVSATTRWSSFHATDPSLSWLTGSSPWLVILQGQGGSLFCHDVLQGRLYILSHSVSLFLKTGLRHCEAIYRAPLWRDRPLPSLWTCRDPDKAFLPTLLARSARRGLAAFYALWRLHLGSRSELSHPVLEWESTELVLTDWRRGRNEAQRDAPSVAEHFARCRPLLDELCGEGGWLPFAFLSTSPHVWLILTEGGPVLAVDVNDTSVWRIADDLELLRRLGSLLLLSGLRLPLRPPSGSGEAAGEPGYEEEERRGRASTASATAATSTRGPTRPTRVTRKGRVATGGVHLSARPESEEQTDGHHGRQESSDDHQRGGSGRGHRDDGAHRHANDKTEPQQRGEHEERKQTDSGRHEHAQESQVARRDEEETEQGDSERSCGGATQTYGGRGRHDSCPSIPLSVPGPDPRLWVPPPHLLFPSPLPPMTPVDDEPSVRPRCPPGPAEEPPTCRPRPPRPSSDTPLSAVSRPSAPPVPPPSTARVRFFLSSSSSSPSYSPAPLSPPSPVSPSSPRSPFIPPIRSPGLRAKPRVSSGHPAAFPPAPSSAPARSERVTSVPSSASPSASCVGKSQPPAAHTA.

Composition is skewed to low complexity over residues 278 to 290 (RPPS…AGEP) and 301 to 319 (ASTA…TRPT). The segment at 278 to 620 (RPPSGSGEAA…KSQPPAAHTA (343 aa)) is disordered. Over residues 336–411 (ARPESEEQTD…QESQVARRDE (76 aa)) the composition is skewed to basic and acidic residues. Composition is skewed to pro residues over residues 446 to 470 (VPGP…PPMT) and 481 to 500 (RCPP…PPRP). Composition is skewed to low complexity over residues 501 to 512 (SSDTPLSAVSRP) and 522 to 541 (TARV…YSPA). Over residues 542-551 (PLSPPSPVSP) the composition is skewed to pro residues. Residues 597–607 (SVPSSASPSAS) are compositionally biased toward low complexity.

The protein belongs to the herpesviridae US22 family.

This is an uncharacterized protein from Homo sapiens (Human).